The sequence spans 179 residues: Putative BPIFA4P protein (179 aa).

Residues methionine 1–alanine 20 form the signal peptide.

It belongs to the BPI/LBP/Plunc superfamily. Plunc family. In terms of tissue distribution, expressed in breast cancer and salivary gland.

It is found in the secreted. Major protein in sweat, has surfactant properties. The sequence is that of Putative BPIFA4P protein (BPIFA4P) from Homo sapiens (Human).